A 1363-amino-acid polypeptide reads, in one-letter code: Vascular endothelial growth factor receptor 3 (1363 aa).

A signal peptide spans 1-24 (MQPGAALNLRLWLCLGLLQGLANG). At 25–775 (YSMTPPTLNI…EGSEDKGSME (751 aa)) the chain is on the extracellular side. 6 N-linked (GlcNAc...) asparagine glycosylation sites follow: Asn-33, Asn-104, Asn-166, Asn-251, Asn-299, and Asn-411. 7 Ig-like C2-type domains span residues 44-118 (GDSL…YIKA), 151-213 (KDSM…WGDQ), 230-326 (YDIQ…TEVI), 331-415 (PFIS…ISLE), 422-552 (PHIH…FYVT), 555-671 (PDGF…KYLS), and 678-764 (PRLT…ASVA). Cystine bridges form between Cys-51/Cys-111 and Cys-158/Cys-206. Cys-252 and Cys-310 are oxidised to a cystine. 3 cysteine pairs are disulfide-bonded: Cys-445-Cys-534, Cys-466-Cys-486, and Cys-578-Cys-653. N-linked (GlcNAc...) asparagine glycosylation is found at Asn-515, Asn-527, Asn-582, Asn-594, Asn-683, and Asn-690. A disulfide bridge links Cys-699 with Cys-751. N-linked (GlcNAc...) asparagine glycosylation is present at Asn-758. Residues 776 to 796 (IVILIGTGVIAVFFWVLLLLI) traverse the membrane as a helical segment. The Cytoplasmic segment spans residues 797–1363 (FCNMKRPAHA…GSTFFADSSY (567 aa)). Tyr-830 and Tyr-833 each carry phosphotyrosine; by SRC. The Protein kinase domain maps to 845 to 1173 (LHLGRVLGHG…DLVEILGDLL (329 aa)). Residues 851 to 859 (LGHGAFGKV) and Lys-879 each bind ATP. The Proton acceptor role is filled by Asp-1037. Position 1063 is a phosphotyrosine; by autocatalysis and SRC (Tyr-1063). Residues Tyr-1068, Tyr-1230, Tyr-1231, and Tyr-1265 each carry the phosphotyrosine; by autocatalysis modification. Residues 1288 to 1330 (ESRHRPEGSFSCKGPGQHMDIPRGHPDPQGRRRRPTQGAQGGK) form a disordered region. Residues 1307–1317 (DIPRGHPDPQG) show a composition bias toward basic and acidic residues. 2 positions are modified to phosphotyrosine; by autocatalysis and SRC: Tyr-1333 and Tyr-1337. Tyr-1363 is modified (phosphotyrosine; by autocatalysis).

It belongs to the protein kinase superfamily. Tyr protein kinase family. CSF-1/PDGF receptor subfamily. In terms of assembly, interacts with VEGFC and VEGFD. Monomer in the absence of bound VEGFC or VEGFD. Homodimer in the presence of bound VEGFC or VEGFD. Can also form a heterodimer with KDR. Interacts with PTPN14; the interaction is enhanced by stimulation with VEGFC. Interacts with CRK, GRB2, PTK2/FAK1, SHC1, PIK3R1 and PTPN11/SHP-2. Identified in a complex with SRC and ITGB1. Autophosphorylated on tyrosine residues upon ligand binding. Autophosphorylation occurs in trans, i.e. one subunit of the dimeric receptor phosphorylates tyrosine residues on the other subunit. Phosphorylation in response to H(2)O(2) is mediated by a process that requires SRC and PRKCD activity. Phosphorylation at Tyr-1068 is required for autophosphorylation at additional tyrosine residues. Phosphorylation at Tyr-1063 and Tyr-1337 is important for interaction with CRK and subsequent activation of MAPK8. Phosphorylation at Tyr-1230, Tyr-1231 and Tyr-1337 is important for interaction with GRB2 and subsequent activation of the AKT1 and MAPK1/ERK2 and/or MAPK3/ERK1 signaling pathways. In response to endothelial cell adhesion onto collagen, can also be phosphorylated in the absence of FLT4 kinase activity by SRC. As to expression, expressed in adult lung and liver, and in fetal liver, brain, intestine and placenta.

Its subcellular location is the cell membrane. It is found in the cytoplasm. The protein resides in the nucleus. The enzyme catalyses L-tyrosyl-[protein] + ATP = O-phospho-L-tyrosyl-[protein] + ADP + H(+). Present in an inactive conformation in the absence of bound ligand. Binding of VEGFC or VEGFD leads to dimerization and activation by autophosphorylation on tyrosine residues. In terms of biological role, tyrosine-protein kinase that acts as a cell-surface receptor for VEGFC and VEGFD, and plays an essential role in adult lymphangiogenesis and in the development of the vascular network and the cardiovascular system during embryonic development. Promotes proliferation, survival and migration of endothelial cells, and regulates angiogenic sprouting. Signaling by activated FLT4 leads to enhanced production of VEGFC, and to a lesser degree VEGFA, thereby creating a positive feedback loop that enhances FLT4 signaling. Modulates KDR signaling by forming heterodimers. Mediates activation of the MAPK1/ERK2, MAPK3/ERK1 signaling pathway, of MAPK8 and the JUN signaling pathway, and of the AKT1 signaling pathway. Phosphorylates SHC1. Mediates phosphorylation of PIK3R1, the regulatory subunit of phosphatidylinositol 3-kinase. Promotes phosphorylation of MAPK8 at 'Thr-183' and 'Tyr-185', and of AKT1 at 'Ser-473'. In Mus musculus (Mouse), this protein is Vascular endothelial growth factor receptor 3 (Flt4).